Consider the following 97-residue polypeptide: Acylphosphatase (97 aa).

The Acylphosphatase-like domain maps to 9–95 (TRHLRIHGLV…CDAQGFEQRE (87 aa)). Catalysis depends on residues Arg24 and Asn42.

This sequence belongs to the acylphosphatase family.

It carries out the reaction an acyl phosphate + H2O = a carboxylate + phosphate + H(+). The protein is Acylphosphatase (acyP) of Acidovorax sp. (strain JS42).